The sequence spans 136 residues: ATP synthase epsilon chain (136 aa).

The tract at residues 104–136 is disordered; sequence AGMEGQPASPEKVKAQQQLNEARARMQASKSAD.

This sequence belongs to the ATPase epsilon chain family. F-type ATPases have 2 components, CF(1) - the catalytic core - and CF(0) - the membrane proton channel. CF(1) has five subunits: alpha(3), beta(3), gamma(1), delta(1), epsilon(1). CF(0) has three main subunits: a, b and c.

The protein localises to the cellular thylakoid membrane. Produces ATP from ADP in the presence of a proton gradient across the membrane. The protein is ATP synthase epsilon chain of Synechococcus sp. (strain CC9902).